Consider the following 1058-residue polypeptide: UPF0507 protein YALI0E18612g (1058 aa).

The VPS9 domain maps to 252–394 (TNEDGPLDQA…IGENREQLEA (143 aa)).

Belongs to the UPF0507 family.

The protein is UPF0507 protein YALI0E18612g of Yarrowia lipolytica (strain CLIB 122 / E 150) (Yeast).